The primary structure comprises 318 residues: Transaldolase (318 aa).

Lysine 126 functions as the Schiff-base intermediate with substrate in the catalytic mechanism.

This sequence belongs to the transaldolase family. Type 1 subfamily. As to quaternary structure, homodimer.

The protein resides in the cytoplasm. It carries out the reaction D-sedoheptulose 7-phosphate + D-glyceraldehyde 3-phosphate = D-erythrose 4-phosphate + beta-D-fructose 6-phosphate. The protein operates within carbohydrate degradation; pentose phosphate pathway; D-glyceraldehyde 3-phosphate and beta-D-fructose 6-phosphate from D-ribose 5-phosphate and D-xylulose 5-phosphate (non-oxidative stage): step 2/3. In terms of biological role, transaldolase is important for the balance of metabolites in the pentose-phosphate pathway. The polypeptide is Transaldolase (Variovorax paradoxus (strain S110)).